Consider the following 223-residue polypeptide: Small ribosomal subunit protein uS3 (223 aa).

In terms of domain architecture, KH type-2 spans 39–108 (IRNFVKKNSY…NILINIVEVK (70 aa)).

It belongs to the universal ribosomal protein uS3 family. In terms of assembly, part of the 30S ribosomal subunit. Forms a tight complex with proteins S10 and S14.

Functionally, binds the lower part of the 30S subunit head. Binds mRNA in the 70S ribosome, positioning it for translation. This is Small ribosomal subunit protein uS3 from Clostridium botulinum (strain Kyoto / Type A2).